The primary structure comprises 232 residues: MKIGIIGAMEEEVTLLRDKIENRQTCTMGGVEIYTGQLNGTEVALLKSGIGKVAAAMGATLLIDHFKPDVIINTGSAGGLAPTLKVGDIVVSDEARYHDADVTAFGYEYGQLPGCPAGFKADDKLIAAAEACIAEHNLNAVRGLIVSGDAFINGSVSLAKIRHNFPQAIAVEMEATAIAHVCHNFKVPFVVVRAISDVADQQSHISFDEFLAVAAKQSSLMVETLVQKLAHG.

Glutamate 12 (proton acceptor) is an active-site residue. Substrate contacts are provided by residues glycine 78, isoleucine 152, and 173-174; that span reads ME. Aspartate 197 acts as the Proton donor in catalysis.

It belongs to the PNP/UDP phosphorylase family. MtnN subfamily. As to quaternary structure, homodimer.

The catalysed reaction is S-adenosyl-L-homocysteine + H2O = S-(5-deoxy-D-ribos-5-yl)-L-homocysteine + adenine. The enzyme catalyses S-methyl-5'-thioadenosine + H2O = 5-(methylsulfanyl)-D-ribose + adenine. It catalyses the reaction 5'-deoxyadenosine + H2O = 5-deoxy-D-ribose + adenine. The protein operates within amino-acid biosynthesis; L-methionine biosynthesis via salvage pathway; S-methyl-5-thio-alpha-D-ribose 1-phosphate from S-methyl-5'-thioadenosine (hydrolase route): step 1/2. Functionally, catalyzes the irreversible cleavage of the glycosidic bond in both 5'-methylthioadenosine (MTA) and S-adenosylhomocysteine (SAH/AdoHcy) to adenine and the corresponding thioribose, 5'-methylthioribose and S-ribosylhomocysteine, respectively. Also cleaves 5'-deoxyadenosine, a toxic by-product of radical S-adenosylmethionine (SAM) enzymes, into 5-deoxyribose and adenine. Thus, is required for in vivo function of the radical SAM enzymes biotin synthase and lipoic acid synthase, that are inhibited by 5'-deoxyadenosine accumulation. This chain is 5'-methylthioadenosine/S-adenosylhomocysteine nucleosidase, found in Escherichia fergusonii (strain ATCC 35469 / DSM 13698 / CCUG 18766 / IAM 14443 / JCM 21226 / LMG 7866 / NBRC 102419 / NCTC 12128 / CDC 0568-73).